Reading from the N-terminus, the 267-residue chain is Exodeoxyribonuclease III (267 aa).

Glu-34 serves as a coordination point for Mg(2+). Tyr-109 is an active-site residue. Mg(2+)-binding residues include Asp-151, Asn-153, and Asp-258. The Proton donor/acceptor role is filled by Asp-151.

This sequence belongs to the DNA repair enzymes AP/ExoA family. Monomer. Mg(2+) is required as a cofactor. The cofactor is Mn(2+).

The catalysed reaction is Exonucleolytic cleavage in the 3'- to 5'-direction to yield nucleoside 5'-phosphates.. Its function is as follows. Major apurinic-apyrimidinic endonuclease of E.coli. It removes the damaged DNA at cytosines and guanines by cleaving on the 3'-side of the AP site by a beta-elimination reaction. This is Exodeoxyribonuclease III (xthA) from Haemophilus influenzae (strain ATCC 51907 / DSM 11121 / KW20 / Rd).